Reading from the N-terminus, the 384-residue chain is Probable E3 ubiquitin-protein ligase rnf113 (384 aa).

Residues 1–11 show a composition bias toward basic residues; the sequence is MDLFRKPKKRN. Positions 1–96 are disordered; that stretch reads MDLFRKPKKR…GPSGPRDQGA (96 aa). Positions 42–52 are enriched in polar residues; that stretch reads PMVQSTKQLDA. The segment covering 60–71 has biased composition (acidic residues); it reads SSDDSDDSDDNQ. Residues 175–203 form a C3H1-type zinc finger; that stretch reads DFAPDICKDYKETGFCTFGDSCKFVHDRS. The RING-type zinc-finger motif lies at 241-279; the sequence is CFICGNPFVDPIVTKCKHYFCTGCALKSFQKSSKCPICQ. The tract at residues 299-384 is disordered; it reads KKQQQKQEAE…ESDDDDAEKD (86 aa). Composition is skewed to basic and acidic residues over residues 303 to 312 and 320 to 334; these read QKQEAEKQEE and EKPH…HDHE. Positions 351–384 are enriched in acidic residues; the sequence is EKSDEEQEIMMEDVEGLEGGENDSESDDDDAEKD.

It carries out the reaction S-ubiquitinyl-[E2 ubiquitin-conjugating enzyme]-L-cysteine + [acceptor protein]-L-lysine = [E2 ubiquitin-conjugating enzyme]-L-cysteine + N(6)-ubiquitinyl-[acceptor protein]-L-lysine.. It participates in protein modification; protein ubiquitination. In terms of biological role, may function as E3 ubiquitin-protein ligase that catalyzes the transfer of ubiquitin onto target proteins. May play a role in DNA repair via its role in the synthesis of 'Lys-63'-linked polyubiquitin chains that recruit proteins involved in repair to sites of DNA damage by alkylating agents. The chain is Probable E3 ubiquitin-protein ligase rnf113 (rnf-113) from Caenorhabditis elegans.